The sequence spans 159 residues: Transcription elongation factor GreA (159 aa).

Positions 14–76 form a coiled coil; sequence VKKLEEELEY…QLENMLRNAN (63 aa).

Belongs to the GreA/GreB family.

In terms of biological role, necessary for efficient RNA polymerase transcription elongation past template-encoded arresting sites. The arresting sites in DNA have the property of trapping a certain fraction of elongating RNA polymerases that pass through, resulting in locked ternary complexes. Cleavage of the nascent transcript by cleavage factors such as GreA or GreB allows the resumption of elongation from the new 3'terminus. GreA releases sequences of 2 to 3 nucleotides. This chain is Transcription elongation factor GreA, found in Clostridium novyi (strain NT).